A 45-amino-acid polypeptide reads, in one-letter code: Photosystem II reaction center protein K (45 aa).

Residues 1–8 (MEAVLLLA) constitute a propeptide that is removed on maturation. Residues 24–44 (MPVIPLFFLALAFVWQAAVGF) form a helical membrane-spanning segment.

It belongs to the PsbK family. In terms of assembly, PSII is composed of 1 copy each of membrane proteins PsbA, PsbB, PsbC, PsbD, PsbE, PsbF, PsbH, PsbI, PsbJ, PsbK, PsbL, PsbM, PsbT, PsbX, PsbY, PsbZ, Psb30/Ycf12, peripheral proteins PsbO, CyanoQ (PsbQ), PsbU, PsbV and a large number of cofactors. It forms dimeric complexes.

It is found in the cellular thylakoid membrane. In terms of biological role, one of the components of the core complex of photosystem II (PSII). PSII is a light-driven water:plastoquinone oxidoreductase that uses light energy to abstract electrons from H(2)O, generating O(2) and a proton gradient subsequently used for ATP formation. It consists of a core antenna complex that captures photons, and an electron transfer chain that converts photonic excitation into a charge separation. The protein is Photosystem II reaction center protein K of Acaryochloris marina (strain MBIC 11017).